Reading from the N-terminus, the 262-residue chain is MTQPGRLTEVFDKCRAEERAALIGYLPNGYPDLDTSIELMTTLVRGGCDIIEVGIAYSDPMMDGPMIAAAAETALANGVRVADVFTTVRAITDAGGHAVVMSYWNPVLRYGVDAFARELAAAGGLGIITPDLIPDEADDWIAASDAHDLDRIFLVAPSSTPERLERTIGACRGFVYAASTMGVTGARDAVSNAAPALVSRVREVSDIAVGVGLGVRSGAQAAEIAAYADGVIVGSALVAAAPQGPAAVRSLAEELATGVRRA.

Active-site proton acceptor residues include Glu52 and Asp63.

This sequence belongs to the TrpA family. In terms of assembly, tetramer of two alpha and two beta chains.

It carries out the reaction (1S,2R)-1-C-(indol-3-yl)glycerol 3-phosphate + L-serine = D-glyceraldehyde 3-phosphate + L-tryptophan + H2O. It participates in amino-acid biosynthesis; L-tryptophan biosynthesis; L-tryptophan from chorismate: step 5/5. The alpha subunit is responsible for the aldol cleavage of indoleglycerol phosphate to indole and glyceraldehyde 3-phosphate. The chain is Tryptophan synthase alpha chain from Mycobacteroides abscessus (strain ATCC 19977 / DSM 44196 / CCUG 20993 / CIP 104536 / JCM 13569 / NCTC 13031 / TMC 1543 / L948) (Mycobacterium abscessus).